The chain runs to 225 residues: Protein NrfC homolog (225 aa).

A signal peptide (tat-type signal) is located at residues 1-28 (MTVCSRRNFVSGMGAVILMTGTSLPAFA). 4Fe-4S ferredoxin-type domains lie at 39-67 (YAMIHDENACIGCTACMDSCRDVNQVPEG), 85-116 (QEYEFFRQSCQHCTNAPCVAVCPTGASFIDKE), and 118-147 (GIVDVHKDLCIGCQYCIAVCPYRVRFIHPI). Positions 48, 51, 54, 58, 94, 97, 102, 106, 127, 130, 133, 137, 154, 157, 170, and 174 each coordinate [4Fe-4S] cluster.

Predicted to be exported by the Tat system. The position of the signal peptide cleavage has not been experimentally proven.

Probably involved in the transfer of electrons from the quinone pool to the type-c cytochromes. The protein is Protein NrfC homolog (nrfC) of Haemophilus influenzae (strain ATCC 51907 / DSM 11121 / KW20 / Rd).